The sequence spans 1582 residues: MRGQAAAPGPIWILAPLLLLLLLLGRWARAASGADIGPGTEQCTTLVQGKFFGYFSAAAVFPANASRCSWTLRNPDPRRYTLYMKVAKAPAPCSGPGRVRTYQFDSFLESTRTYLGVESFDEVLRLCDSSAPLAFLQASKQFLQMQRQQPPQDGDLGPQGEFPSSSDDFSVEYLVVGNRNPSHAACQMLCRWLDACLAGSRSSHPCGIMQTPCACLGGDVGDPASSPLVPRGDVCLRDGVAGGPENCLTSLTQDRGGHGSAGGWKLWSLWGECTRDCGGGLQTRTRTCLPTLGVEGGGCEGVLEEGRLCNRKACGPTGRSSSRSQSLRSTDARRREEFGDELQQFGFPSPQTGDPAAEEWSPWSVCSSTCGEGWQTRTRFCVSSSYSTQCSGPLREQRLCNNSAVCPVHGAWDEWSPWSLCSSTCGRGFRDRTRTCRPPQFGGNPCEGPEKQTKFCNIALCPGRAVDGNWNEWSSWSTCSASCSQGRQQRTRECNGPSYGGAECQGHWVETRDCFLQQCPVDGKWQAWASWGSCSVTCGGGSQRRERVCSGPFFGGAACQGPQDEYRQCGAQRCPEPHEICDEDNFGAVVWKETPAGEVAAVRCPRNATGLILRRCELDEEGIAFWEPPTYIRCVSIDYRNIQMMTREHLAKAQRGLPGEGVSEVIQTLLEISQDGTSYSGDLLSTIDVLRNMTEIFRRAYYSPTPGDVQNFVQIISNLLAEENRDKWEEAQLMGPNAKELFRLVEDFVDVIGFRMKDLRDAYQVTDNLVLSIHKLPASGATDISFPMKGWRATGDWAKVPEDRVTVSKSVFSTGLAEADDSSVFVVGTVLYRNLGSFLALQRNTTVLNSKVISVTVKPPPRSLLTPLEIEFAHMYNGTTNQTCILWDETDGPSSSAPPQLGPWSWRGCRTVPLDALRTRCLCDRLSTFAILAQLSADATMDKVTVPSVTLIVGCGVSSLTLLMLVIIYVSVWRYIRSERSVILINFCLSIISSNALILIGQTQTRNKVVCTLVAAFLHFFFLSSFCWVLTEAWQSYMAVTGRLRSRLVRKRFLCLGWGLPALVVAISVGFTKAKGYSTMNYCWLSLEGGLLYAFVGPAAAVVLVNMVIGILVFNKLVSKDGITDKKLKERAGASLWSSCVVLPLLALTWMSAVLAVTDRRSALFQILFAVFDSLEGFVIVMVHCILRREVQDAVKCRVVDRQEEGNGDSGGSFQNGHAQLMTDFEKDVDLACRSVLNKDIAACRTATITGTFKRPSLPEEEKMKLAKGPPPTFNSLPANVSKLHLHGSPRYPGGPLPDFPNHSLTLKKDKAPKSSFIGDGDIFKKLDSELSRAQEKALDTSYVILPTATATLRPKPKEEPKYSINIDQMPQTRLIHLSMAPDASFPTRSPPAREPPGGAPPEVPPVQPPPPPPPPPPPPQQPIPPPPTLEPAPPSLGDTGEPAAHPGPSSGAGAKNENVATLSVSSLERRKSRYAELDFEKIMHTRKRHQDMFQDLNRKLQHAAEKEKEVPGADSKPEKQQTPNKRAWESLRKPHGTPAWVKKELEPLPPSPLELRSVEWEKAGATIPLVGQDIIDLQTEV.

A signal peptide spans 1–33; it reads MRGQAAAPGPIWILAPLLLLLLLLGRWARAASG. The Extracellular portion of the chain corresponds to 34–948; sequence ADIGPGTEQC…ATMDKVTVPS (915 aa). N-linked (GlcNAc...) asparagine glycosylation occurs at Asn-64. The 55-residue stretch at 261–315 folds into the TSP type-1 1 domain; the sequence is AGGWKLWSLWGECTRDCGGGLQTRTRTCLPTLGVEGGGCEGVLEEGRLCNRKACG. Disulfide bonds link Cys-273–Cys-309, Cys-277–Cys-314, and Cys-288–Cys-299. The interval 313–335 is disordered; sequence ACGPTGRSSSRSQSLRSTDARRR. Over residues 319–329 the composition is skewed to low complexity; sequence RSSSRSQSLRS. TSP type-1 domains are found at residues 354-407, 409-462, 467-520, and 522-575; these read DPAA…AVCP, HGAW…ALCP, DGNW…QQCP, and DGKW…QRCP. Cystine bridges form between Cys-366-Cys-400, Cys-370-Cys-406, Cys-381-Cys-390, Cys-421-Cys-456, Cys-425-Cys-461, Cys-436-Cys-446, Cys-479-Cys-514, Cys-483-Cys-519, Cys-494-Cys-504, Cys-534-Cys-569, Cys-538-Cys-574, Cys-549-Cys-559, Cys-581-Cys-616, and Cys-604-Cys-634. A glycan (N-linked (GlcNAc...) asparagine) is linked at Asn-401. Asn-607 carries N-linked (GlcNAc...) asparagine glycosylation. Phosphothreonine is present on Thr-609. N-linked (GlcNAc...) asparagine glycans are attached at residues Asn-692, Asn-844, Asn-877, and Asn-881. The 180-residue stretch at 760–939 folds into the GAIN-B domain; the sequence is RDAYQVTDNL…AILAQLSADA (180 aa). 2 disulfide bridges follow: Cys-884–Cys-921 and Cys-909–Cys-923. A GPS region spans residues 884 to 939; it reads CILWDETDGPSSSAPPQLGPWSWRGCRTVPLDALRTRCLCDRLSTFAILAQLSADA. The N-terminal stalk following vasculostatin-120 cleavage which is not required for signaling activity stretch occupies residues 927–943; that stretch reads STFAILAQLSADATMDK. A helical membrane pass occupies residues 949–969; sequence VTLIVGCGVSSLTLLMLVIIY. Residues 970–980 are Cytoplasmic-facing; it reads VSVWRYIRSER. The helical transmembrane segment at 981-1001 threads the bilayer; sequence SVILINFCLSIISSNALILIG. At 1002–1008 the chain is on the extracellular side; it reads QTQTRNK. The chain crosses the membrane as a helical span at residues 1009 to 1029; that stretch reads VVCTLVAAFLHFFFLSSFCWV. Over 1030 to 1052 the chain is Cytoplasmic; that stretch reads LTEAWQSYMAVTGRLRSRLVRKR. A helical transmembrane segment spans residues 1053–1073; the sequence is FLCLGWGLPALVVAISVGFTK. Residues 1074–1093 are Extracellular-facing; it reads AKGYSTMNYCWLSLEGGLLY. A helical membrane pass occupies residues 1094 to 1114; it reads AFVGPAAAVVLVNMVIGILVF. Residues 1115–1136 are Cytoplasmic-facing; the sequence is NKLVSKDGITDKKLKERAGASL. A helical transmembrane segment spans residues 1137 to 1157; the sequence is WSSCVVLPLLALTWMSAVLAV. Over 1158 to 1166 the chain is Extracellular; it reads TDRRSALFQ. The chain crosses the membrane as a helical span at residues 1167–1187; sequence ILFAVFDSLEGFVIVMVHCIL. Topologically, residues 1188-1582 are cytoplasmic; it reads RREVQDAVKC…QDIIDLQTEV (395 aa). The interval 1363-1582 is involved in interaction with MAGI1; it reads YSINIDQMPQ…QDIIDLQTEV (220 aa). Residues 1382–1549 are disordered; that stretch reads PDASFPTRSP…AWVKKELEPL (168 aa). Positions 1389 to 1435 are enriched in pro residues; sequence RSPPAREPPGGAPPEVPPVQPPPPPPPPPPPPQQPIPPPPTLEPAPP. The segment covering 1441 to 1455 has biased composition (low complexity); it reads GEPAAHPGPSSGAGA. Ser-1467 is modified (phosphoserine). Basic and acidic residues-rich tracts occupy residues 1468-1484 and 1491-1520; these read LERR…EKIM and QDMF…KPEK. Residues 1579–1582 are indispensable for interaction with MAGI1; that stretch reads QTEV.

Belongs to the G-protein coupled receptor 2 family. LN-TM7 subfamily. Interacts with ELMO1 and DOCK1. When bound to ELMO1 and DOCK1, acts as a module to promote apoptotic cell engulfment. Interacts with MDM2; the interaction results in inhibition of MDM2-mediated ubiquitination and degradation of DLG4/PSD95. Interacts with PARD3 and TIAM1; the interaction is required for correct dendritic localization of PARD3 and TIAM1 and for dendritic spine formation. Interacts with MAGI1, MAGI3 and BAIAP2. Interacts with PHYHIP. Interacts with DLG4 (via PDZ domain). Vasculostatin-120: Interacts with CD36. Vasculostatin-120: Interacts with ARRB2. Interacts with BAIAP3; this interaction is direct. Post-translationally, proteolytically cleaved to produce vasculostatin-40 and vasculostatin-120. Vasculostatin-40 is the major form and is produced through proteolytic cleavage by MMP14 between residues 321 and 329 with cleavage likely to be between Ser-326 and Leu-327. In terms of processing, ubiquitinated. As to expression, in brain, widespread expression in all neuropil-rich zones including spinal cord gray matter, cerebellar molecular layer, cerebral cortex, thalamic nuclei and basal ganglia with no expression in white matter (at protein level). In the cerebellar molecular layer, highly expressed in interneuron processes whereas Purkinje cells and their dendrites show weaker expression (at protein level). In the olfactory bulb, highly expressed in glomeruli (at protein level). In the retina, highly concentrated in the outer and inner plexiform layers (at protein level). Expressed in brain. Enriched in hippocampus and cortex. Also detected in other tissues including bone marrow and spleen.

It is found in the cell membrane. Its subcellular location is the cell projection. It localises to the phagocytic cup. The protein resides in the cell junction. The protein localises to the focal adhesion. It is found in the dendritic spine. Its subcellular location is the postsynaptic density. It localises to the secreted. In terms of biological role, phosphatidylserine receptor which enhances the engulfment of apoptotic cells. Also mediates the binding and engulfment of Gram-negative bacteria. Stimulates production of reactive oxygen species by macrophages in response to Gram-negative bacteria, resulting in enhanced microbicidal macrophage activity. In the gastric mucosa, required for recognition and engulfment of apoptotic gastric epithelial cells. Promotes myoblast fusion. Activates the Rho pathway in a G-protein-dependent manner. Inhibits MDM2-mediated ubiquitination and degradation of DLG4/PSD95, promoting DLG4 stability and regulating synaptic plasticity. Required for the formation of dendritic spines by ensuring the correct localization of PARD3 and TIAM1. Potent inhibitor of angiogenesis in brain and may play a significant role as a mediator of the p53/TP53 signal in suppression of glioblastoma. Functionally, inhibits angiogenesis in a CD36-dependent manner. Inhibits angiogenesis. This chain is Adhesion G protein-coupled receptor B1, found in Mus musculus (Mouse).